Here is a 403-residue protein sequence, read N- to C-terminus: Phosphoglycerate kinase (403 aa).

Residues 22–24 (DLN), arginine 37, 60–63 (HLGR), arginine 119, and arginine 156 each bind substrate. Residues lysine 206, glycine 302, glutamate 333, and 359–362 (GGDS) each bind ATP.

This sequence belongs to the phosphoglycerate kinase family. In terms of assembly, monomer.

The protein resides in the cytoplasm. The catalysed reaction is (2R)-3-phosphoglycerate + ATP = (2R)-3-phospho-glyceroyl phosphate + ADP. It functions in the pathway carbohydrate degradation; glycolysis; pyruvate from D-glyceraldehyde 3-phosphate: step 2/5. The chain is Phosphoglycerate kinase from Streptomyces griseus subsp. griseus (strain JCM 4626 / CBS 651.72 / NBRC 13350 / KCC S-0626 / ISP 5235).